Here is a 304-residue protein sequence, read N- to C-terminus: Ribonuclease Z (304 aa).

Residues His63, His65, Asp67, His68, His143, Asp213, and His271 each coordinate Zn(2+). Catalysis depends on Asp67, which acts as the Proton acceptor.

It belongs to the RNase Z family. In terms of assembly, homodimer. Requires Zn(2+) as cofactor.

The catalysed reaction is Endonucleolytic cleavage of RNA, removing extra 3' nucleotides from tRNA precursor, generating 3' termini of tRNAs. A 3'-hydroxy group is left at the tRNA terminus and a 5'-phosphoryl group is left at the trailer molecule.. Zinc phosphodiesterase, which displays some tRNA 3'-processing endonuclease activity. Probably involved in tRNA maturation, by removing a 3'-trailer from precursor tRNA. In Porphyromonas gingivalis (strain ATCC BAA-308 / W83), this protein is Ribonuclease Z.